The chain runs to 822 residues: ATP-dependent zinc metalloprotease FtsH (822 aa).

The Cytoplasmic segment spans residues 1 to 76 (MEFNKLELLI…NQKEPGKARK (76 aa)). Residues 44-54 (SLDQPSDAPSN) are compositionally biased toward polar residues. Residues 44–71 (SLDQPSDAPSNNKKRNLDQPDNPNQKEP) are disordered. The chain crosses the membrane as a helical span at residues 77 to 97 (IIWSFIIIILVLGVLALIILS). Residues 98 to 251 (GFSFSATSLN…QSMSLPTSYS (154 aa)) lie on the Extracellular side of the membrane. A helical membrane pass occupies residues 252–272 (FYTAASLVLSILPFILLIGII). Over 273–822 (YYSMRKMGQA…SKESSSDKKK (550 aa)) the chain is Cytoplasmic. ATP is bound at residue 347–354 (GPPGTGKT). Histidine 569 serves as a coordination point for Zn(2+). Glutamate 570 is an active-site residue. Zn(2+) contacts are provided by histidine 573 and aspartate 648. Positions 758-794 (KKELEEKKKAEDLIRKAKKESEASSKEEKEMDVEKKV) are enriched in basic and acidic residues. Residues 758-822 (KKELEEKKKA…SKESSSDKKK (65 aa)) form a disordered region. The segment covering 796 to 805 (KPSASSTEPT) has biased composition (low complexity). Over residues 812 to 822 (PSKESSSDKKK) the composition is skewed to basic and acidic residues.

It in the central section; belongs to the AAA ATPase family. The protein in the C-terminal section; belongs to the peptidase M41 family. Homohexamer. Requires Zn(2+) as cofactor.

It localises to the cell membrane. Acts as a processive, ATP-dependent zinc metallopeptidase for both cytoplasmic and membrane proteins. Plays a role in the quality control of integral membrane proteins. This is ATP-dependent zinc metalloprotease FtsH from Malacoplasma penetrans (strain HF-2) (Mycoplasma penetrans).